Reading from the N-terminus, the 534-residue chain is Glycerol kinase 5 (534 aa).

ATP-binding residues include serine 33 and threonine 34. Glycerol contacts are provided by arginine 103, aspartate 280, and glutamine 281. ATP contacts are provided by threonine 302, glycine 345, and glycine 445.

This sequence belongs to the FGGY kinase family. Expressed predominantly in sebaceous glands.

The protein resides in the cytoplasm. The enzyme catalyses glycerol + ATP = sn-glycerol 3-phosphate + ADP + H(+). It functions in the pathway polyol metabolism; glycerol degradation via glycerol kinase pathway; sn-glycerol 3-phosphate from glycerol: step 1/1. Skin-specific kinase that plays a key role in glycerol metabolism, catalyzing its phosphorylation to produce sn-glycerol 3-phosphate. Involved in skin-specific regulation of sterol regulatory element-binding protein (SREBP) processing and lipid biosynthesis. This is Glycerol kinase 5 (Gk5) from Mus musculus (Mouse).